The primary structure comprises 227 residues: MNDLPRAELPGSGSPNPESLILASGSPRRAQLLSAAGYEFSVQPASDSAECGICSRETAPEMVARLAYRKAADVVARIDDGLVLAADTVASCVGNILGKPHNRDHAEEMLRLLSGRNHDVFTGVCLWSRRDEKFVVDVVRTRLQMSDLTDQQLTEHLDSLRWDGKAGAFGYQDGNDWLKVIGNDSESNVVGLPMERLAELLENFEQNAEKITTPTIDSIESSDSSCS.

Residues 1-21 (MNDLPRAELPGSGSPNPESLI) form a disordered region. D87 functions as the Proton acceptor in the catalytic mechanism.

Belongs to the Maf family. YhdE subfamily. It depends on a divalent metal cation as a cofactor.

Its subcellular location is the cytoplasm. The catalysed reaction is dTTP + H2O = dTMP + diphosphate + H(+). It carries out the reaction UTP + H2O = UMP + diphosphate + H(+). Functionally, nucleoside triphosphate pyrophosphatase that hydrolyzes dTTP and UTP. May have a dual role in cell division arrest and in preventing the incorporation of modified nucleotides into cellular nucleic acids. This Rhodopirellula baltica (strain DSM 10527 / NCIMB 13988 / SH1) protein is dTTP/UTP pyrophosphatase.